The sequence spans 296 residues: Glycine--tRNA ligase alpha subunit (296 aa).

The protein belongs to the class-II aminoacyl-tRNA synthetase family. In terms of assembly, tetramer of two alpha and two beta subunits.

Its subcellular location is the cytoplasm. The enzyme catalyses tRNA(Gly) + glycine + ATP = glycyl-tRNA(Gly) + AMP + diphosphate. This Desulfitobacterium hafniense (strain Y51) protein is Glycine--tRNA ligase alpha subunit.